Consider the following 327-residue polypeptide: ATPase GET3 (327 aa).

27-34 (KGGVGKTT) contributes to the ATP binding site. The active site involves Asp56. Positions 231 and 258 each coordinate ATP. Zn(2+) contacts are provided by Cys269 and Cys272.

It belongs to the arsA ATPase family. In terms of assembly, homodimer. Component of the Golgi to ER traffic (GET) complex, which is composed of GET1, GET2 and GET3. Within the complex, GET1 and GET2 form a heterotetramer which is stabilized by phosphatidylinositol binding and which binds to the GET3 homodimer. Interacts with the chloride channel protein GEF1.

It is found in the cytoplasm. It localises to the endoplasmic reticulum. Its subcellular location is the golgi apparatus. Functionally, ATPase required for the post-translational delivery of tail-anchored (TA) proteins to the endoplasmic reticulum. Recognizes and selectively binds the transmembrane domain of TA proteins in the cytosol. This complex then targets to the endoplasmic reticulum by membrane-bound receptors GET1 and GET2, where the tail-anchored protein is released for insertion. This process is regulated by ATP binding and hydrolysis. ATP binding drives the homodimer towards the closed dimer state, facilitating recognition of newly synthesized TA membrane proteins. ATP hydrolysis is required for insertion. Subsequently, the homodimer reverts towards the open dimer state, lowering its affinity for the GET1-GET2 receptor, and returning it to the cytosol to initiate a new round of targeting. Cooperates with the HDEL receptor ERD2 to mediate the ATP-dependent retrieval of resident ER proteins that contain a C-terminal H-D-E-L retention signal from the Golgi to the ER. Involved in low-level resistance to the oxyanions arsenite and arsenate, and in heat tolerance. The sequence is that of ATPase GET3 from Yarrowia lipolytica (strain CLIB 122 / E 150) (Yeast).